We begin with the raw amino-acid sequence, 39 residues long: Potassium channel toxin alpha-KTx 2.18 (39 aa).

3 disulfides stabilise this stretch: Cys7/Cys29, Cys13/Cys34, and Cys17/Cys36. Isoleucine amide is present on Ile39.

This sequence belongs to the short scorpion toxin superfamily. Potassium channel inhibitor family. Alpha-KTx 02 subfamily. In terms of tissue distribution, expressed by the venom gland.

The protein localises to the secreted. In terms of biological role, weakly blocks Kv1.3/KCNA3 voltage-gated potassium channels. The chain is Potassium channel toxin alpha-KTx 2.18 from Centruroides limpidus (Mexican scorpion).